The chain runs to 203 residues: Guanylate kinase (203 aa).

In terms of domain architecture, Guanylate kinase-like spans 3-181 (GSLFIVAAPS…AHTDLRAIVQ (179 aa)). Residue 10-17 (APSGAGKT) coordinates ATP.

The protein belongs to the guanylate kinase family.

It localises to the cytoplasm. It carries out the reaction GMP + ATP = GDP + ADP. Functionally, essential for recycling GMP and indirectly, cGMP. The sequence is that of Guanylate kinase from Nitrosococcus oceani (strain ATCC 19707 / BCRC 17464 / JCM 30415 / NCIMB 11848 / C-107).